Here is a 209-residue protein sequence, read N- to C-terminus: Ribosomal RNA large subunit methyltransferase E (209 aa).

Positions 63, 65, 83, 99, and 124 each coordinate S-adenosyl-L-methionine. Lys-164 serves as the catalytic Proton acceptor.

It belongs to the class I-like SAM-binding methyltransferase superfamily. RNA methyltransferase RlmE family.

Its subcellular location is the cytoplasm. The catalysed reaction is uridine(2552) in 23S rRNA + S-adenosyl-L-methionine = 2'-O-methyluridine(2552) in 23S rRNA + S-adenosyl-L-homocysteine + H(+). Specifically methylates the uridine in position 2552 of 23S rRNA at the 2'-O position of the ribose in the fully assembled 50S ribosomal subunit. The protein is Ribosomal RNA large subunit methyltransferase E of Alkalilimnicola ehrlichii (strain ATCC BAA-1101 / DSM 17681 / MLHE-1).